The primary structure comprises 161 residues: Stress response protein YvgO (161 aa).

An N-terminal signal peptide occupies residues 1–26 (MKRIRIPMTLALGAALTIAPLSFASA).

In Bacillus subtilis (strain 168), this protein is Stress response protein YvgO (yvgO).